Consider the following 483-residue polypeptide: Spore germination protein B1 (483 aa).

The next 5 membrane-spanning stretches (helical) occupy residues 289–309 (ILIT…HTGL), 323–343 (LNVP…IELI), 353–373 (PIGQ…AVQA), 375–395 (IVSA…FTVP), and 410–430 (VMIS…LFVI).

This sequence belongs to the GerABKA family.

The protein localises to the cell membrane. Functionally, involved in the response to the germinative mixture of L-asparagine, glucose, fructose and potassium ions (AGFK). Cannot stimulate germination in the absence of gerD and gerK gene products (fructose and glucose receptors respectively). The protein is Spore germination protein B1 (gerBA) of Bacillus subtilis (strain 168).